The primary structure comprises 394 residues: Protein TsgA homolog (394 aa).

12 helical membrane passes run 11-31, 51-71, 76-96, 101-121, 134-154, 160-180, 206-226, 246-266, 274-294, 297-317, 334-354, and 363-383; these read WISF…GMVM, FLNT…EIIP, LVFG…GHNL, ACMF…TFLI, LLFT…IAAT, VAWY…FILT, IGVL…LGFI, GLVS…SVAL, IVTV…SSQQ, MLSM…TTLI, FILT…GPIV, and LATA…LGFV.

It belongs to the major facilitator superfamily. TsgA family.

The protein localises to the cell inner membrane. In Edwardsiella ictaluri (strain 93-146), this protein is Protein TsgA homolog.